The primary structure comprises 178 residues: MTQLSSNDVPSMGRRQFMNLLTFGTATGVALGALYPVANYFMPLRAGGGGGGTSAKDELGNPITKTGWLATHQAGDRSLVQGLKGDPTYLIVNEGGEIGEFGLNAICTHLGCVVPWDSGANKFICPCHGSQYDTNGKVVRGPAPLSLALAHVDIEDDAVLVKQWSETDFRTNENPWWA.

The chain crosses the membrane as a helical span at residues 20–42; it reads LLTFGTATGVALGALYPVANYFM. Residues 65 to 161 form the Rieske domain; it reads KTGWLATHQA…VDIEDDAVLV (97 aa). Residues cysteine 107, histidine 109, cysteine 125, and histidine 128 each coordinate [2Fe-2S] cluster. Cysteine 112 and cysteine 127 are joined by a disulfide.

This sequence belongs to the Rieske iron-sulfur protein family. The 4 large subunits of the cytochrome b6-f complex are cytochrome b6, subunit IV (17 kDa polypeptide, PetD), cytochrome f and the Rieske protein, while the 4 small subunits are PetG, PetL, PetM and PetN. The complex functions as a dimer. It depends on [2Fe-2S] cluster as a cofactor.

It is found in the cellular thylakoid membrane. The enzyme catalyses 2 oxidized [plastocyanin] + a plastoquinol + 2 H(+)(in) = 2 reduced [plastocyanin] + a plastoquinone + 4 H(+)(out). Its function is as follows. Component of the cytochrome b6-f complex, which mediates electron transfer between photosystem II (PSII) and photosystem I (PSI), cyclic electron flow around PSI, and state transitions. In Prochlorococcus marinus (strain AS9601), this protein is Cytochrome b6-f complex iron-sulfur subunit.